The sequence spans 501 residues: MLSQRVGILIIGVLATATFWLCRRYFQLRGIPGPFVARITNLCRVRWVGSRKSHEIHSRLHDQYGSVVRFGPNMVSVADPAAISVIYPARSGFLKGDFYHVFKSPDEPPDVFTAQDEGIHKTLRAPVAPYYSFSKLQSLETAIDNNIDRLFHQLDRKDSGDSTSLTTWLQAFAFDTVWAWMFTNPYGMLEMGSTEEKKTLESNWEIFQIIGPLSQSSTLRNLAGIINAILTALKIDSIPQLHKHTVSLIKSREEQFESSSEELNASDNVDMMTQLLLMKSKNSMIPPWTVSSLSLLNVFAGSDSTAVVMGTMWHNLLLHRDSMQCLYNELLEHEAQGSLTRPVPKWKEVRGLAYLDACLNEALRLHPPFCLPFERVVPDTGLSIGDYYLPPGTLVGMSPYVVGRYKPVFGQDADQWRPERWLECSPQDQRKMESSMITFGAGRRVCLGKNVAIMEIKKLIPAILLRYDIKLLDPTSFKVENSWFFRQEGLDVEMKKRDGSA.

A helical transmembrane segment spans residues 5–22 (RVGILIIGVLATATFWLC). C446 contributes to the heme binding site.

Belongs to the cytochrome P450 family. It depends on heme as a cofactor.

The protein resides in the membrane. It participates in secondary metabolite biosynthesis; terpenoid biosynthesis. Functionally, cytochrome P450 monooxygenase; part of the cluster that mediates the biosynthesis of shearones, diterpenoid pyrones (DPs) which are structurally diverse meroterpenoids consisting of a diterpene linked by a pyrone, and which may exhibit a range of bioactivities. Whitin the pathway, esdpH takes part in the molecular scaffold modification via the hydroxylation at C-6' and can transform shearone C into shearone E, shearone D into shearone F, and shearone H into shearone I, the latter being the final product of the pathway. The molecular scaffold is commonly biosynthesized by a series of enzymes including the non-reducing polyketide synthase (NR-PKS) esdpA that generates an alpha-pyrone; the prenyltransferase esdpC that attaches a geranylgeranyl pyrophosphate (GGPP) produced by the GGPP synthase (GGPPS) esdpD onto the pyrone unit; the FAD-dependent monooxygenase esdpE that converts an olefin on the diterpene unit into an epoxide; and the terpene cyclase esdpB that catalyzes the cyclization reactions to give the molecular backbone shearone A. In the modification steps, esdpF oxidizes the hydroxy group to a ketone at C-3 and esdpG then attaches hydroxy groups at both C-11 and C-12. After that, esdpI hydroxylates at C-20 and esdpH hydroxylates at C-6'. The ether bridge is generated by nucleophilic attack of the hydroxy group at C-20 to the carbonyl carbon at C-3. EsdpH can also functions prior to esdpI. The different combinations of these modification enzymes lead to the production of diverse shearone derivatives, shearone I being the end product of the pathway. The alpha-ketoglutarate-dependent dioxygenase esdpJ seems not to be involved in this pathway. This chain is Cytochrome P450 monooxygenase esdpH, found in Penicillium shearii (Eupenicillium shearii).